The sequence spans 267 residues: MEMO1 family protein MM_1761 (267 aa).

Belongs to the MEMO1 family.

The protein is MEMO1 family protein MM_1761 of Methanosarcina mazei (strain ATCC BAA-159 / DSM 3647 / Goe1 / Go1 / JCM 11833 / OCM 88) (Methanosarcina frisia).